The primary structure comprises 89 residues: Small ribosomal subunit protein uS19 (89 aa).

The protein belongs to the universal ribosomal protein uS19 family.

Functionally, protein S19 forms a complex with S13 that binds strongly to the 16S ribosomal RNA. This is Small ribosomal subunit protein uS19 from Parabacteroides distasonis (strain ATCC 8503 / DSM 20701 / CIP 104284 / JCM 5825 / NCTC 11152).